The primary structure comprises 141 residues: Hemoglobin subunit alpha (141 aa).

In terms of domain architecture, Globin spans 1–141; it reads VLSAEDKANV…VSTVLTSKYR (141 aa). Ser-3 carries the post-translational modification Phosphoserine. Lys-7 and Lys-11 each carry N6-succinyllysine. Position 16 is an N6-acetyllysine; alternate (Lys-16). Lys-16 carries the N6-succinyllysine; alternate modification. Residue Tyr-24 is modified to Phosphotyrosine. Residue Ser-35 is modified to Phosphoserine. At Lys-40 the chain carries N6-succinyllysine. Phosphoserine is present on Ser-49. His-58 contributes to the O2 binding site. Residue His-87 participates in heme b binding. A Phosphoserine modification is found at Ser-102. Thr-108 bears the Phosphothreonine mark. Ser-124 and Ser-131 each carry phosphoserine. 2 positions are modified to phosphothreonine: Thr-134 and Thr-137. At Ser-138 the chain carries Phosphoserine.

It belongs to the globin family. As to quaternary structure, heterotetramer of two alpha chains and two beta chains. In terms of tissue distribution, red blood cells.

Functionally, involved in oxygen transport from the lung to the various peripheral tissues. In Peromyscus crinitus (Canyon mouse), this protein is Hemoglobin subunit alpha.